A 124-amino-acid polypeptide reads, in one-letter code: Small ribosomal subunit protein bS6 (124 aa).

Residues E98–E124 are disordered. Basic and acidic residues predominate over residues K104–V115.

It belongs to the bacterial ribosomal protein bS6 family.

Functionally, binds together with bS18 to 16S ribosomal RNA. The polypeptide is Small ribosomal subunit protein bS6 (Tolumonas auensis (strain DSM 9187 / NBRC 110442 / TA 4)).